The primary structure comprises 495 residues: Probable cobyric acid synthase (495 aa).

The GATase cobBQ-type domain maps to 256-441 (DVDIAVIRLT…LHGLFDNVNI (186 aa)). Residue C334 is the Nucleophile of the active site. H433 is an active-site residue.

This sequence belongs to the CobB/CobQ family. CobQ subfamily.

It participates in cofactor biosynthesis; adenosylcobalamin biosynthesis. In terms of biological role, catalyzes amidations at positions B, D, E, and G on adenosylcobyrinic A,C-diamide. NH(2) groups are provided by glutamine, and one molecule of ATP is hydrogenolyzed for each amidation. The chain is Probable cobyric acid synthase from Methanococcoides burtonii (strain DSM 6242 / NBRC 107633 / OCM 468 / ACE-M).